The sequence spans 1012 residues: Structural polyprotein (1012 aa).

Aspartate 30 is a binding site for a divalent metal cation. The 243-residue stretch at 513–755 folds into the Peptidase S50 domain; that stretch reads ADKGYEVVAN…AGRQYHLAMA (243 aa). The Nucleophile role is filled by serine 652. Residue lysine 692 is part of the active site. The disordered stretch occupies residues 969–1012; sequence AMELKHRNPRRAPPKPKPKPNAPTQRPPGRLGRWIRTVSDEDLE. Positions 975–986 are enriched in basic residues; the sequence is RNPRRAPPKPKP. The tract at residues 1003 to 1012 is interaction with VP1 protein; the sequence is IRTVSDEDLE.

Homotrimer. A central divalent metal stabilizes the VP2 trimer. Interacts with host ITGA4/ITGB1. In terms of assembly, homodimer. Interacts (via C-terminus) with VP1 in the cytoplasm. Interacts with VP2. Specific enzymatic cleavages yield mature proteins. The capsid assembly seems to be regulated by polyprotein processing. The protease VP4 cleaves itself off the polyprotein, thus releasing pre-VP2 and VP3 within the infected cell. During capsid assembly, the C-terminus of pre-VP2 is further processed by VP4, giving rise to VP2, the external capsid protein and three small peptides that all stay closely associated with the capsid.

It is found in the virion. The protein localises to the host cytoplasm. Functionally, capsid protein VP2 self assembles to form an icosahedral capsid with a T=13 symmetry, about 70 nm in diameter, and consisting of 260 VP2 trimers. The capsid encapsulates the genomic dsRNA. VP2 is also involved in attachment and entry into the host cell by interacting with host ITGA4/ITGB1. The precursor of VP2 plays an important role in capsid assembly. First, pre-VP2 and VP2 oligomers assemble to form a procapsid. Then, the pre-VP2 intermediates may be processed into VP2 proteins by proteolytic cleavage mediated by VP4 to obtain the mature virion. The final capsid is composed of pentamers and hexamers but VP2 has a natural tendency to assemble into all-pentameric structures. Therefore pre-VP2 may be required to allow formation of the hexameric structures. Its function is as follows. Protease VP4 is a serine protease that cleaves the polyprotein into its final products. Pre-VP2 is first partially cleaved, and may be completely processed by VP4 upon capsid maturation. In terms of biological role, capsid protein VP3 plays a key role in virion assembly by providing a scaffold for the capsid made of VP2. May self-assemble to form a T=4-like icosahedral inner-capsid composed of at least 180 trimers. Plays a role in genomic RNA packaging by recruiting VP1 into the capsid and interacting with the dsRNA genome segments to form a ribonucleoprotein complex. Additionally, the interaction of the VP3 C-terminal tail with VP1 removes the inherent structural blockade of the polymerase active site. Thus, VP3 can also function as a transcriptional activator. Functionally, structural peptide 1 is a small peptide derived from pre-VP2 C-terminus. It destabilizes and perforates cell membranes, suggesting a role during entry. Structural peptide 2 is a small peptide derived from pVP2 C-terminus. It is not essential for the virus viability, but viral growth is affected when missing. Its function is as follows. Structural peptide 3 is a small peptide derived from pVP2 C-terminus. It is not essential for the virus viability, but viral growth is affected when missing. In terms of biological role, structural peptide 4 is a small peptide derived from pVP2 C-terminus. It is essential for the virus viability. The chain is Structural polyprotein from Avian infectious bursal disease virus (strain STC) (IBDV).